The chain runs to 162 residues: NADH-quinone oxidoreductase subunit I (162 aa).

4Fe-4S ferredoxin-type domains lie at 53-83 (LRRYPNGEERCIACKLCEAVCPAQAITIEAE) and 93-122 (TRYDIDMTKCIYCGFCQEACPVDAIVEGPN). The [4Fe-4S] cluster site is built by C63, C66, C69, C73, C102, C105, C108, and C112.

It belongs to the complex I 23 kDa subunit family. NDH-1 is composed of 14 different subunits. Subunits NuoA, H, J, K, L, M, N constitute the membrane sector of the complex. It depends on [4Fe-4S] cluster as a cofactor.

It is found in the cell inner membrane. It carries out the reaction a quinone + NADH + 5 H(+)(in) = a quinol + NAD(+) + 4 H(+)(out). Its function is as follows. NDH-1 shuttles electrons from NADH, via FMN and iron-sulfur (Fe-S) centers, to quinones in the respiratory chain. The immediate electron acceptor for the enzyme in this species is believed to be ubiquinone. Couples the redox reaction to proton translocation (for every two electrons transferred, four hydrogen ions are translocated across the cytoplasmic membrane), and thus conserves the redox energy in a proton gradient. The sequence is that of NADH-quinone oxidoreductase subunit I from Sphingopyxis alaskensis (strain DSM 13593 / LMG 18877 / RB2256) (Sphingomonas alaskensis).